Consider the following 874-residue polypeptide: Probable cation-transporting P-type ATPase (874 aa).

Residues 1-41 lie on the Cytoplasmic side of the membrane; the sequence is MNSWTGLSEQAAIKSRQEHGANFLPEKKATPFWLLFLQQFK. Residues 42-62 traverse the membrane as a helical segment; that stretch reads SLVVILLLLASLLSFVVAIVS. The Extracellular portion of the chain corresponds to 63–79; it reads GLRSNWNFNHDLIIEWV. The chain crosses the membrane as a helical span at residues 80–100; the sequence is QPFIILLTVFANSLIGSIQEF. Residues 101-237 are Cytoplasmic-facing; the sequence is KAQKSASALK…TKLSPLQQKL (137 aa). Residues 238 to 257 form a helical membrane-spanning segment; the sequence is EKIGKWFSWFGLGLFAVVFL. Topologically, residues 258 to 275 are extracellular; that stretch reads VQTALLGFDNFTNNWSIA. Residues 276–293 form a helical membrane-spanning segment; sequence LIGAIALVVAIIPEGLVT. Residues 294-644 lie on the Cytoplasmic side of the membrane; the sequence is FINVIFALSV…EEGRKTFLTC (351 aa). D331 functions as the 4-aspartylphosphate intermediate in the catalytic mechanism. Residues D589 and D593 each coordinate Mg(2+). A helical transmembrane segment spans residues 645 to 664; the sequence is KRVLLNLFLTSIAGTVVVLL. At 665-687 the chain is on the extracellular side; that stretch reads GLFILGQVFKTNLLQQGHDFQVF. A helical transmembrane segment spans residues 688–708; that stretch reads SPTQLLIINLFVHGFPAVALA. Over 709-726 the chain is Cytoplasmic; that stretch reads VQPVKEKLMVGSFSTKNL. The helical transmembrane segment at 727 to 749 threads the bilayer; the sequence is FYNRQGFDLIWQSLFLSFLTLLF. Residues 750 to 770 lie on the Extracellular side of the membrane; that stretch reads YSLGIIYAINNRDLQTSGDLI. The helical transmembrane segment at 771–790 threads the bilayer; the sequence is NRAGSTCGFFILGASAALNS. The Cytoplasmic portion of the chain corresponds to 791 to 803; sequence LNLMVDKPLLMTN. A helical transmembrane segment spans residues 804–826; it reads PWFFKLVWIGSLASILVFLLIIF. Residues 827–844 lie on the Extracellular side of the membrane; it reads INPLGLVFNVLQDLTNHP. The chain crosses the membrane as a helical span at residues 845 to 865; it reads VLISYSFGGVILYMGMNEVVK. At 866–874 the chain is on the cytoplasmic side; sequence LIRLGYGNI.

It belongs to the cation transport ATPase (P-type) (TC 3.A.3) family. Type II subfamily.

It is found in the cell membrane. It catalyses the reaction ATP + H2O = ADP + phosphate + H(+). Functionally, could mediate calcium influx. The sequence is that of Probable cation-transporting P-type ATPase (pacL) from Mycoplasma genitalium (strain ATCC 33530 / DSM 19775 / NCTC 10195 / G37) (Mycoplasmoides genitalium).